Reading from the N-terminus, the 801-residue chain is Probable inorganic carbon transporter subunit DabA (801 aa).

Residues Cys-298, Asp-300, His-481, and Cys-496 each coordinate Zn(2+). The segment at 575–596 (RENAAAERAESMGSDASSGVSE) is disordered.

The protein belongs to the inorganic carbon transporter (TC 9.A.2) DabA family. Forms a complex with DabB. Requires Zn(2+) as cofactor.

It is found in the cell membrane. Its function is as follows. Part of an energy-coupled inorganic carbon pump. The polypeptide is Probable inorganic carbon transporter subunit DabA (Haloarcula marismortui (strain ATCC 43049 / DSM 3752 / JCM 8966 / VKM B-1809) (Halobacterium marismortui)).